Consider the following 1323-residue polypeptide: ABC transporter C family member 12 (1323 aa).

Positions 110 to 396 (HCISLFFYSI…LPILIALGIQ (287 aa)) constitute an ABC transmembrane type-1 1 domain. The next 6 helical transmembrane spans lie at 111 to 131 (CISL…PEIL), 152 to 172 (MGYY…FCNY), 227 to 247 (VFGI…CLAL), 252 to 272 (IGWP…FNGL), 338 to 358 (ILIA…FSTY), and 375 to 395 (SYLN…ALGI). The 225-residue stretch at 428-652 (VYMKNSTTTW…KLEFASLLQE (225 aa)) folds into the ABC transporter 1 domain. 464–471 (GSVGSGKS) lines the ATP pocket. Positions 657–695 (ENTKGDDSDDDDDKKDDDKKEEKVEKPKQSDKDGTLISE) are disordered. Basic and acidic residues predominate over residues 672-690 (DDDKKEEKVEKPKQSDKDG). Helical transmembrane passes span 712 to 732 (VTAG…LETG), 772 to 792 (IYIG…FSFF), 840 to 860 (LIAT…ATLI), 862 to 882 (ISII…LFFI), and 952 to 972 (WLGL…CIFI). The 291-residue stretch at 720–1010 (FLFAMILFLL…GVLQAADTET (291 aa)) folds into the ABC transmembrane type-1 2 domain. The 235-residue stretch at 1047 to 1281 (IKFDNLVMRY…QNGLLTWLVN (235 aa)) folds into the ABC transporter 2 domain. Residue 1081 to 1088 (GRTGAGKS) coordinates ATP.

It belongs to the ABC transporter superfamily. ABCC family. Conjugate transporter (TC 3.A.1.208) subfamily.

The protein resides in the membrane. This chain is ABC transporter C family member 12 (abcC12), found in Dictyostelium discoideum (Social amoeba).